A 100-amino-acid chain; its full sequence is UPF0235 protein Cvib_0403 (100 aa).

It belongs to the UPF0235 family.

This Chlorobium phaeovibrioides (strain DSM 265 / 1930) (Prosthecochloris vibrioformis (strain DSM 265)) protein is UPF0235 protein Cvib_0403.